A 1537-amino-acid chain; its full sequence is Dual oxidase (1537 aa).

A disordered region spans residues 1-29 (MSVPSAPHQRAESKNRVPRPGQKNRKLPK). Over 1–626 (MSVPSAPHQR…EGYDYFSGSE (626 aa)) the chain is Extracellular. The tract at residues 63 to 628 (MYSQTEKQRY…YDYFSGSELM (566 aa)) is peroxidase-like; mediates peroxidase activity. N-linked (GlcNAc...) asparagine glycans are attached at residues asparagine 133, asparagine 233, asparagine 577, and asparagine 606. A helical transmembrane segment spans residues 627–647 (LMFIYVCVFLGFVPILCAGAG). Over 648–1029 (YCVVKLQNSK…ITFLEENRQN (382 aa)) the chain is Cytoplasmic. The residue at position 826 (serine 826) is a Phosphoserine. EF-hand domains lie at 855–890 (PNDM…FSRG), 891–926 (KTDD…LVEI), and 936–971 (QVTE…YKGD). 9 residues coordinate Ca(2+): aspartate 868, aspartate 870, aspartate 872, arginine 874, glutamate 879, aspartate 904, aspartate 906, asparagine 908, and glutamate 915. A helical transmembrane segment spans residues 1030–1050 (IFYLFLFYVVTIVLFVERFIH). The Extracellular segment spans residues 1051–1065 (YSFMAEHTDLRHIMG). A helical transmembrane segment spans residues 1066–1086 (VGIAITRGSAASLSFCYSLLL). The Ferric oxidoreductase domain maps to 1078-1218 (LSFCYSLLLL…TLYIGLYLLS (141 aa)). At 1087-1116 (LTMSRNLITKLKEFPIQQYIPLDSHIQFHK) the chain is on the cytoplasmic side. Tyrosine 1105 carries the phosphotyrosine modification. The helical transmembrane segment at 1117 to 1137 (IAACTALFFSVLHTVGHIVNF) threads the bilayer. Residues 1138 to 1171 (YHVSTQSHENLRCLTREVHFASDYKPDITFWLFQ) are Extracellular-facing. A helical membrane pass occupies residues 1172–1192 (TVTGTTGVMLFIIMCIIFVFA). The Cytoplasmic portion of the chain corresponds to 1193 to 1202 (HPTIRKKAYN). The helical transmembrane segment at 1203–1223 (FFWNMHTLYIGLYLLSLIHGL) threads the bilayer. The Extracellular portion of the chain corresponds to 1224 to 1230 (ARLTGPP). Residues 1231–1251 (RFWMFFLGPGIVYTLDKIVSL) traverse the membrane as a helical segment. Topologically, residues 1252 to 1537 (RTKYMALDVI…YFIHHFENFG (286 aa)) are cytoplasmic. An FAD-binding FR-type domain is found at 1253–1358 (TKYMALDVID…EGPFGGGNQD (106 aa)).

The protein in the N-terminal section; belongs to the peroxidase family.

The protein resides in the membrane. The enzyme catalyses NADH + O2 + H(+) = H2O2 + NAD(+). It carries out the reaction NADPH + O2 + H(+) = H2O2 + NADP(+). Peroxidase activity is inhibited by aminotriazole and azide. Its function is as follows. Plays a role in innate immunity limiting microbial proliferation in the gut. Acts downstream of a hh-signaling pathway to induce the production of reactive oxygen species (ROS) in response to intestinal bacterial infection. May generate antimicrobial oxidative burst through its peroxidase-like domain. This Drosophila melanogaster (Fruit fly) protein is Dual oxidase (Duox).